The sequence spans 289 residues: Acetyl-coenzyme A carboxylase carboxyl transferase subunit beta (289 aa).

One can recognise a CoA carboxyltransferase N-terminal domain in the interval 28 to 289 (VMTKCPKCKK…QGGEMAVWQS (262 aa)). Zn(2+) contacts are provided by C32, C35, C51, and C54. The C4-type zinc finger occupies 32 to 54 (CPKCKKIMYTKELLKNLKVCVNC).

Belongs to the AccD/PCCB family. As to quaternary structure, acetyl-CoA carboxylase is a heterohexamer composed of biotin carboxyl carrier protein (AccB), biotin carboxylase (AccC) and two subunits each of ACCase subunit alpha (AccA) and ACCase subunit beta (AccD). Requires Zn(2+) as cofactor.

Its subcellular location is the cytoplasm. It catalyses the reaction N(6)-carboxybiotinyl-L-lysyl-[protein] + acetyl-CoA = N(6)-biotinyl-L-lysyl-[protein] + malonyl-CoA. The protein operates within lipid metabolism; malonyl-CoA biosynthesis; malonyl-CoA from acetyl-CoA: step 1/1. Component of the acetyl coenzyme A carboxylase (ACC) complex. Biotin carboxylase (BC) catalyzes the carboxylation of biotin on its carrier protein (BCCP) and then the CO(2) group is transferred by the transcarboxylase to acetyl-CoA to form malonyl-CoA. The sequence is that of Acetyl-coenzyme A carboxylase carboxyl transferase subunit beta from Bacillus cereus (strain ATCC 10987 / NRS 248).